Reading from the N-terminus, the 156-residue chain is Small ribosomal subunit protein uS7 (156 aa).

It belongs to the universal ribosomal protein uS7 family. As to quaternary structure, part of the 30S ribosomal subunit. Contacts proteins S9 and S11.

In terms of biological role, one of the primary rRNA binding proteins, it binds directly to 16S rRNA where it nucleates assembly of the head domain of the 30S subunit. Is located at the subunit interface close to the decoding center, probably blocks exit of the E-site tRNA. The chain is Small ribosomal subunit protein uS7 from Bacillus licheniformis (strain ATCC 14580 / DSM 13 / JCM 2505 / CCUG 7422 / NBRC 12200 / NCIMB 9375 / NCTC 10341 / NRRL NRS-1264 / Gibson 46).